We begin with the raw amino-acid sequence, 310 residues long: Ribosomal RNA small subunit methyltransferase H (310 aa).

S-adenosyl-L-methionine-binding positions include 35 to 37 (GGH), D52, F79, D100, and Q107.

The protein belongs to the methyltransferase superfamily. RsmH family.

The protein resides in the cytoplasm. It catalyses the reaction cytidine(1402) in 16S rRNA + S-adenosyl-L-methionine = N(4)-methylcytidine(1402) in 16S rRNA + S-adenosyl-L-homocysteine + H(+). Functionally, specifically methylates the N4 position of cytidine in position 1402 (C1402) of 16S rRNA. This Anaeromyxobacter dehalogenans (strain 2CP-1 / ATCC BAA-258) protein is Ribosomal RNA small subunit methyltransferase H.